The primary structure comprises 256 residues: MWFLILFLALSLGGIDAAPPVQSQVDCENSQPWHVAVYRFNKYQCGGVLLDRNWVLTAAHCYNDKYQVWLGKNNFLEDEPSDQHRLVSKAIPHPDFNMSLLNEHTPQPEDDYSNDLMLLRLSKPADITDVVKPITLPTEEPKLGSTCLASGWGSTTPIKFKYPDDLQCVNLKLLPNEDCDKAHEMKVTDAMLCAGEMDGGSYTCEHDSGGPLICDGILQGITSWGPEPCGEPTEPSVYTKLIKFSSWIRETMANNP.

The N-terminal stretch at 1 to 17 (MWFLILFLALSLGGIDA) is a signal peptide. The interval 18–24 (APPVQSQ) is activation peptide homolog. Positions 18-253 (APPVQSQVDC…FSSWIRETMA (236 aa)) constitute a Peptidase S1 domain. Cys-45 and Cys-61 are joined by a disulfide. Positions 77 and 84 each coordinate Zn(2+). Intrachain disulfides connect Cys-147/Cys-214, Cys-179/Cys-193, and Cys-204/Cys-229.

It belongs to the peptidase S1 family. Kallikrein subfamily. As to quaternary structure, 7S nerve growth factor is composed of two alpha chains, a beta dimer composed of identical chains, and two gamma chains. It depends on Zn(2+) as a cofactor. In terms of processing, the presence of Gln-24 prevents cleavage of the activation peptide, which remains attached at the amino end of the mature alpha chain.

The protein is Kallikrein 1-related peptidase-like b4 (Klk1b4) of Mus musculus (Mouse).